Consider the following 854-residue polypeptide: Glucans biosynthesis glucosyltransferase H (854 aa).

7 helical membrane passes run 155-175 (ILLV…KTIL), 209-229 (ILVL…TALM), 528-548 (VFLT…FLML), 583-603 (IALF…SVIL), 619-639 (FISL…RMLF), 671-691 (FVRH…MAWL), and 695-715 (FLWW…VSVY).

Belongs to the glycosyltransferase 2 family. OpgH subfamily.

Its subcellular location is the cell inner membrane. Its pathway is glycan metabolism; osmoregulated periplasmic glucan (OPG) biosynthesis. In terms of biological role, involved in the biosynthesis of osmoregulated periplasmic glucans (OPGs). The polypeptide is Glucans biosynthesis glucosyltransferase H (Pectobacterium carotovorum subsp. carotovorum (strain PC1)).